The chain runs to 43 residues: Myotoxin-2 (43 aa).

Intrachain disulfides connect cysteine 4/cysteine 36, cysteine 11/cysteine 30, and cysteine 18/cysteine 37.

Belongs to the crotamine-myotoxin family. In terms of assembly, monomer. In terms of tissue distribution, expressed by the venom gland.

The protein resides in the secreted. In terms of biological role, cationic peptide that possesses multiple functions. It acts as a cell-penetrating peptide (CPP), and as a potent voltage-gated potassium channel (Kv) inhibitor. It exhibits antimicrobial activities, hind limb paralysis, and severe muscle necrosis by a non-enzymatic mechanism. The polypeptide is Myotoxin-2 (Crotalus concolor (Midget faded rattlesnake)).